A 393-amino-acid chain; its full sequence is Lipid-A-disaccharide synthase (393 aa).

It belongs to the LpxB family.

The enzyme catalyses a lipid X + a UDP-2-N,3-O-bis[(3R)-3-hydroxyacyl]-alpha-D-glucosamine = a lipid A disaccharide + UDP + H(+). It participates in bacterial outer membrane biogenesis; LPS lipid A biosynthesis. In terms of biological role, condensation of UDP-2,3-diacylglucosamine and 2,3-diacylglucosamine-1-phosphate to form lipid A disaccharide, a precursor of lipid A, a phosphorylated glycolipid that anchors the lipopolysaccharide to the outer membrane of the cell. In Rhodopseudomonas palustris (strain ATCC BAA-98 / CGA009), this protein is Lipid-A-disaccharide synthase.